Consider the following 383-residue polypeptide: Delta(12)-fatty-acid desaturase (383 aa).

Positions 1 to 24 (MGAGGRMPVPTSSKKSETDTTKRV) are disordered. Basic and acidic residues predominate over residues 14–24 (KKSETDTTKRV). Residues 56 to 76 (LISDIIIASCFYYVATNYFSL) traverse the membrane as a helical segment. The Histidine box-1 motif lies at 105 to 109 (HECGH). A helical transmembrane segment spans residues 117-137 (WLDDTVGLIFHSFLLVPYFSW). The short motif at 141–145 (HRRHH) is the Histidine box-2 element. Helical transmembrane passes span 179–199 (IMML…FNVS), 225–245 (IYLS…YAAA), and 252–272 (ICLY…ITYL). Positions 315-319 (HVAHH) match the Histidine box-3 motif.

It belongs to the fatty acid desaturase type 1 family. Homo- and heterodimer. Interacts with FAD3 but not with FAD6. FAD2-FAD3 heterodimers can form a metabolic channel in which 18:1-PC is converted to 18:3-PC without releasing a free 18:2-PC intermediate. As to expression, expressed in shoots and roots. Expressed in leaves, stems, flowers and siliques.

Its subcellular location is the endoplasmic reticulum membrane. It is found in the microsome membrane. The enzyme catalyses (9Z)-octadecenoyl-CoA + 2 Fe(II)-[cytochrome b5] + O2 + 2 H(+) = (9Z,12Z)-octadecadienoyl-CoA + 2 Fe(III)-[cytochrome b5] + 2 H2O. The catalysed reaction is (9Z)-hexadecenoyl-CoA + 2 Fe(II)-[cytochrome b5] + O2 + 2 H(+) = (9Z,12Z)-hexadecadienoyl-CoA + 2 Fe(III)-[cytochrome b5] + 2 H2O. It carries out the reaction a (9Z)-octadecenoyl-containing glycerolipid + 2 Fe(II)-[cytochrome b5] + O2 + 2 H(+) = a (9Z,12Z)-octadecadienoyl-containing glycerolipid + 2 Fe(III)-[cytochrome b5] + 2 H2O. It catalyses the reaction (9Z)-octadecenoyl-CoA + AH2 + O2 = (9Z,12Z)-octadecadienoyl-CoA + A + 2 H2O. The enzyme catalyses (9Z)-hexadecenoyl-CoA + AH2 + O2 = (9Z,12Z)-hexadecadienoyl-CoA + A + 2 H2O. The catalysed reaction is (9Z)-tetradecenoyl-CoA + 2 Fe(II)-[cytochrome b5] + O2 + 2 H(+) = (9Z,12Z)-tetradecadienoyl-CoA + 2 Fe(III)-[cytochrome b5] + 2 H2O. It carries out the reaction (9Z)-pentadecenoyl-CoA + 2 Fe(II)-[cytochrome b5] + O2 + 2 H(+) = (9Z,12Z)-pentadecadienoyl-CoA + 2 Fe(III)-[cytochrome b5] + 2 H2O. It catalyses the reaction (9Z)-heptadecenoyl-CoA + 2 Fe(II)-[cytochrome b5] + O2 + 2 H(+) = (9Z,12Z)-heptadecadienoyl-CoA + 2 Fe(III)-[cytochrome b5] + 2 H2O. It functions in the pathway lipid metabolism; polyunsaturated fatty acid biosynthesis. Functionally, ER (microsomal) omega-6 fatty acid desaturase introduces the second double bond in the biosynthesis of 18:3 fatty acids, important constituents of plant membranes. Delta(12)-desaturase with regioselectivity determined by the double bond (delta(9) position) and carboxyl group of the substrate. Can use both 16:1 and 18:1 fatty acids as substrates. It is thought to use cytochrome b5 as an electron donor and to act on fatty acids esterified to phosphatidylcholine (PC) and, possibly, other phospholipids. Very low constitutive hydroxylation activity. Required for desaturation of fatty acids present in extraplastidial membranes, including mitochondria. Required for salt tolerance during seed germination and early seedling growth. This Arabidopsis thaliana (Mouse-ear cress) protein is Delta(12)-fatty-acid desaturase.